The following is a 4062-amino-acid chain: Transcription-associated protein 1 (4062 aa).

A disordered region spans residues 531-562 (LASEPSTSEDADESGGDPNKLPPPTKEGKKTS). 2 TPR repeats span residues 1346–1379 (LDGV…LLDI) and 1677–1714 (RRSF…DDEE). Residues 2659–2670 (VETEMKREEPEP) are compositionally biased toward basic and acidic residues. The tract at residues 2659–2692 (VETEMKREEPEPMEVDEKDSQDDSKDAGEPKEKE) is disordered. Positions 2671-2680 (MEVDEKDSQD) are enriched in acidic residues. Residues 2681 to 2692 (DSKDAGEPKEKE) show a composition bias toward basic and acidic residues. The 612-residue stretch at 2800–3411 (LIEFISSKHE…FYHIREAVSV (612 aa)) folds into the FAT domain. The stretch at 2847–2880 (IETLESLGTLYNEISEFDQFAAIWERRAVFPDTM) is one TPR 3 repeat. Residues 3682–4046 (EPNFEIVIKG…DCVSLISRAK (365 aa)) enclose the PI3K/PI4K catalytic domain. The tract at residues 3688 to 3694 (VIKGGQV) is G-loop. The segment at 3902 to 3910 (NLTPMGPDQ) is catalytic loop. Residues 3922-3950 (NPSYRFEIRGGRSLHDIQHFGHEVPFRLT) are activation loop. Residues 4031-4062 (AKLRKDDCVSLISRAKDSDNLARMPPTYHAWF) enclose the FATC domain.

Belongs to the PI3/PI4-kinase family. TRA1 subfamily. In terms of assembly, interacts with histone acetyltransferase Tip60 homolog mys-1. Probably a component of a complex with histone acetyltransferase (HAT) activity, at least composed of mys-1 and trr-1. As to expression, expressed in germ cells and somatic cells.

It is found in the nucleus. The protein resides in the chromosome. Its function is as follows. Influences germ cell fate in hermaphrodites. Acts downstream of tra-2 and tra-3 and through the Tip60 histone acetyltransferase complex to regulate germ cell fate decisions. Required for spermatogenesis and embryonic development. Acts with tra-2 to promote expression of fog-3 and control male tail development. Involved in the negative regulation of vulval development. Involved in the positive regulation of transcription factor daf-16, probably acting by histone acetylation; thereby modulating stress resistance. Plays a role in acetylation of nucleosomal histone H4, probably acting as a component of the Tip60 histone acetyltransferase complex. The chain is Transcription-associated protein 1 from Caenorhabditis elegans.